We begin with the raw amino-acid sequence, 163 residues long: Lipoprotein signal peptidase (163 aa).

Transmembrane regions (helical) follow at residues 11–31, 63–83, and 88–108; these read ILIAVFVVIFDQVTKYIIATT, KMTFFFIITIIILIALVYFFI, and YNLFMQVAISLLFAGALGNFI. Residues Asp118 and Asp136 contribute to the active site. The helical transmembrane segment at 131-151 threads the bilayer; that stretch reads IFNIADSSLTIGVILIIIALL.

The protein belongs to the peptidase A8 family.

The protein resides in the cell membrane. It carries out the reaction Release of signal peptides from bacterial membrane prolipoproteins. Hydrolyzes -Xaa-Yaa-Zaa-|-(S,diacylglyceryl)Cys-, in which Xaa is hydrophobic (preferably Leu), and Yaa (Ala or Ser) and Zaa (Gly or Ala) have small, neutral side chains.. It participates in protein modification; lipoprotein biosynthesis (signal peptide cleavage). This protein specifically catalyzes the removal of signal peptides from prolipoproteins. In Staphylococcus aureus (strain Mu3 / ATCC 700698), this protein is Lipoprotein signal peptidase.